The sequence spans 77 residues: Acyl carrier protein (77 aa).

In terms of domain architecture, Carrier spans 1–75; sequence MVFEKVKDII…DVVNYIKAHT (75 aa). O-(pantetheine 4'-phosphoryl)serine is present on S35.

It belongs to the acyl carrier protein (ACP) family. Post-translationally, 4'-phosphopantetheine is transferred from CoA to a specific serine of apo-ACP by AcpS. This modification is essential for activity because fatty acids are bound in thioester linkage to the sulfhydryl of the prosthetic group.

It is found in the cytoplasm. It functions in the pathway lipid metabolism; fatty acid biosynthesis. Functionally, carrier of the growing fatty acid chain in fatty acid biosynthesis. The protein is Acyl carrier protein of Clostridium acetobutylicum (strain ATCC 824 / DSM 792 / JCM 1419 / IAM 19013 / LMG 5710 / NBRC 13948 / NRRL B-527 / VKM B-1787 / 2291 / W).